Reading from the N-terminus, the 397-residue chain is Putative F-box protein At2g04810 (397 aa).

The F-box domain occupies 20–68; that stretch reads SDWSKLCPDVLRKIYETLRSPVDSHRAKIVCSNWYSVWKTCVKRPLCPL.

This chain is Putative F-box protein At2g04810, found in Arabidopsis thaliana (Mouse-ear cress).